A 460-amino-acid chain; its full sequence is Glucan endo-1,3-beta-D-glucosidase (460 aa).

The N-terminal stretch at 1 to 26 is a signal peptide; sequence MAANVQTSSLLFLVFLLLQNFYSANS. Glu-123 (proton donor) is an active-site residue. The active-site Nucleophile is the Glu-268. The segment at 352 to 371 is disordered; it reads NTQNPTTPATPTPTPKAAGS. An N-linked (GlcNAc...) asparagine glycan is attached at Asn-355. A disulfide bridge connects residues Cys-373 and Cys-435. Asn-447 carries N-linked (GlcNAc...) asparagine glycosylation.

Belongs to the glycosyl hydrolase 17 family. As to quaternary structure, homodimer. Post-translationally, glycosylated. Contains two additional disulfide bonds, but it is unclear if they are between the pairs Cys-392-Cys-398 and Cys-407-Cys-453 (PudMed:18096638) or between the pairs Cys-392-Cys-453 and Cys-398-Cys-407 (PudMed:12392450). Expressed only in pollen.

The protein localises to the secreted. It carries out the reaction Hydrolysis of (1-&gt;3)-beta-D-glucosidic linkages in (1-&gt;3)-beta-D-glucans.. The chain is Glucan endo-1,3-beta-D-glucosidase (OLE9) from Olea europaea (Common olive).